A 131-amino-acid polypeptide reads, in one-letter code: Urease subunit beta (131 aa).

Residues 100–131 (PLDPAAGVTSDEDAASAVVPRGAETSEREARA) form a disordered region.

The protein belongs to the urease beta subunit family. Heterotrimer of UreA (gamma), UreB (beta) and UreC (alpha) subunits. Three heterotrimers associate to form the active enzyme.

It is found in the cytoplasm. The enzyme catalyses urea + 2 H2O + H(+) = hydrogencarbonate + 2 NH4(+). The protein operates within nitrogen metabolism; urea degradation; CO(2) and NH(3) from urea (urease route): step 1/1. The sequence is that of Urease subunit beta from Kocuria rhizophila (strain ATCC 9341 / DSM 348 / NBRC 103217 / DC2201).